A 155-amino-acid polypeptide reads, in one-letter code: Endoribonuclease YbeY (155 aa).

Zn(2+) is bound by residues His-120, His-124, and His-130.

Belongs to the endoribonuclease YbeY family. The cofactor is Zn(2+).

The protein resides in the cytoplasm. Functionally, single strand-specific metallo-endoribonuclease involved in late-stage 70S ribosome quality control and in maturation of the 3' terminus of the 16S rRNA. The polypeptide is Endoribonuclease YbeY (Borreliella burgdorferi (strain ATCC 35210 / DSM 4680 / CIP 102532 / B31) (Borrelia burgdorferi)).